We begin with the raw amino-acid sequence, 177 residues long: ATP synthase subunit delta (177 aa).

Belongs to the ATPase delta chain family. F-type ATPases have 2 components, F(1) - the catalytic core - and F(0) - the membrane proton channel. F(1) has five subunits: alpha(3), beta(3), gamma(1), delta(1), epsilon(1). F(0) has three main subunits: a(1), b(2) and c(10-14). The alpha and beta chains form an alternating ring which encloses part of the gamma chain. F(1) is attached to F(0) by a central stalk formed by the gamma and epsilon chains, while a peripheral stalk is formed by the delta and b chains.

It localises to the cell inner membrane. F(1)F(0) ATP synthase produces ATP from ADP in the presence of a proton or sodium gradient. F-type ATPases consist of two structural domains, F(1) containing the extramembraneous catalytic core and F(0) containing the membrane proton channel, linked together by a central stalk and a peripheral stalk. During catalysis, ATP synthesis in the catalytic domain of F(1) is coupled via a rotary mechanism of the central stalk subunits to proton translocation. Its function is as follows. This protein is part of the stalk that links CF(0) to CF(1). It either transmits conformational changes from CF(0) to CF(1) or is implicated in proton conduction. The polypeptide is ATP synthase subunit delta (Haemophilus influenzae (strain PittEE)).